The chain runs to 416 residues: Phosphoglycerate kinase (416 aa).

Positions 23, 24, 25, 26, 38, 39, 62, 63, 65, 66, 121, 122, 169, and 170 each coordinate (2R)-3-phosphoglycerate. Residue Gly-213 coordinates ADP. Gly-213 provides a ligand contact to CDP. AMP-binding residues include Ala-214 and Lys-215. Residues Ala-214 and Lys-215 each contribute to the ATP site. Ala-214 is a Mg(2+) binding site. Asp-218 is a CDP binding site. Residue Asp-218 participates in Mg(2+) binding. Residue Lys-219 participates in AMP binding. Lys-219 contacts ATP. Residue Gly-237 coordinates ADP. Residue Gly-237 coordinates CDP. AMP is bound by residues Gly-238 and Gly-312. 2 residues coordinate ATP: Gly-238 and Gly-312. Gly-337 and Phe-342 together coordinate CDP. Position 342 (Phe-342) interacts with ADP. Glu-343 contributes to the AMP binding site. Asp-374 lines the Mg(2+) pocket. Thr-375 lines the ATP pocket.

Belongs to the phosphoglycerate kinase family. As to quaternary structure, monomer. The cofactor is Mg(2+).

The catalysed reaction is (2R)-3-phosphoglycerate + ATP = (2R)-3-phospho-glyceroyl phosphate + ADP. Its pathway is carbohydrate degradation; glycolysis; pyruvate from D-glyceraldehyde 3-phosphate: step 2/5. This chain is Phosphoglycerate kinase (PGK), found in Plasmodium falciparum (isolate 3D7).